Here is a 521-residue protein sequence, read N- to C-terminus: Cytochrome P450 1A1 (521 aa).

Phe229 provides a ligand contact to substrate. Cys463 is a binding site for heme.

It belongs to the cytochrome P450 family. The cofactor is heme.

It localises to the endoplasmic reticulum membrane. It is found in the microsome membrane. It catalyses the reaction an organic molecule + reduced [NADPH--hemoprotein reductase] + O2 = an alcohol + oxidized [NADPH--hemoprotein reductase] + H2O + H(+). In terms of biological role, cytochromes P450 are a group of heme-thiolate monooxygenases. They oxidize a variety of structurally unrelated compounds, including steroids, fatty acids, and xenobiotics. This is Cytochrome P450 1A1 (cyp1a1) from Opsanus tau (Oyster toadfish).